We begin with the raw amino-acid sequence, 345 residues long: Probable velvet family sexual development regulator LACBIDRAFT_317102 (345 aa).

2 stretches are compositionally biased toward polar residues: residues 1–13 (MFTT…SYRS) and 24–38 (EIQN…NPPR). Disordered stretches follow at residues 1 to 43 (MFTT…TRRR), 138 to 189 (ESWT…SPSS), and 310 to 345 (RKRR…SDED). In terms of domain architecture, Velvet spans 62–306 (GQTIRAELDE…ARWGVRLNIR (245 aa)). Low complexity-rich tracts occupy residues 141–158 (TSRS…PTLS) and 167–184 (SSPQ…ASTP). Positions 336–345 (SEDDEASDED) are enriched in acidic residues.

The protein belongs to the velvet family.

It is found in the nucleus. In terms of biological role, velvet-domain-containing protein that probably acts as a positive regulator of sexual development. This Laccaria bicolor (strain S238N-H82 / ATCC MYA-4686) (Bicoloured deceiver) protein is Probable velvet family sexual development regulator LACBIDRAFT_317102.